The following is a 400-amino-acid chain: Probable transposase for insertion sequence element ISRM3-like (400 aa).

Belongs to the transposase mutator family.

Functionally, required for the transposition of the insertion element. The polypeptide is Probable transposase for insertion sequence element ISRM3-like (Sinorhizobium fredii (strain NBRC 101917 / NGR234)).